An 879-amino-acid polypeptide reads, in one-letter code: DNA mismatch repair protein MutS (879 aa).

Residue 639–646 (GPNMGGKS) coordinates ATP.

This sequence belongs to the DNA mismatch repair MutS family.

This protein is involved in the repair of mismatches in DNA. It is possible that it carries out the mismatch recognition step. This protein has a weak ATPase activity. In Aromatoleum aromaticum (strain DSM 19018 / LMG 30748 / EbN1) (Azoarcus sp. (strain EbN1)), this protein is DNA mismatch repair protein MutS.